The following is a 475-amino-acid chain: Ribulose bisphosphate carboxylase large chain (475 aa).

Positions 1 to 2 (MS) are excised as a propeptide. P3 carries the N-acetylproline modification. At K14 the chain carries N6,N6,N6-trimethyllysine. Positions 123 and 173 each coordinate substrate. Catalysis depends on K175, which acts as the Proton acceptor. Substrate is bound at residue K177. The Mg(2+) site is built by K201, D203, and E204. Position 201 is an N6-carboxylysine (K201). Catalysis depends on H294, which acts as the Proton acceptor. Substrate-binding residues include R295, H327, and S379.

Belongs to the RuBisCO large chain family. Type I subfamily. Heterohexadecamer of 8 large chains and 8 small chains; disulfide-linked. The disulfide link is formed within the large subunit homodimers. The cofactor is Mg(2+). In terms of processing, the disulfide bond which can form in the large chain dimeric partners within the hexadecamer appears to be associated with oxidative stress and protein turnover.

Its subcellular location is the plastid. The protein resides in the chloroplast. The enzyme catalyses 2 (2R)-3-phosphoglycerate + 2 H(+) = D-ribulose 1,5-bisphosphate + CO2 + H2O. It catalyses the reaction D-ribulose 1,5-bisphosphate + O2 = 2-phosphoglycolate + (2R)-3-phosphoglycerate + 2 H(+). In terms of biological role, ruBisCO catalyzes two reactions: the carboxylation of D-ribulose 1,5-bisphosphate, the primary event in carbon dioxide fixation, as well as the oxidative fragmentation of the pentose substrate in the photorespiration process. Both reactions occur simultaneously and in competition at the same active site. The polypeptide is Ribulose bisphosphate carboxylase large chain (Mesostigma viride (Green alga)).